The chain runs to 36 residues: Protein YnfP (36 aa).

In Escherichia coli (strain K12), this protein is Protein YnfP.